The sequence spans 264 residues: N-carbamoylsarcosine amidase (264 aa).

Cysteine 177 (nucleophile) is an active-site residue. The disordered stretch occupies residues threonine 240–histidine 264.

As to quaternary structure, homotetramer. Sulfate serves as cofactor.

The catalysed reaction is N-carbamoylsarcosine + H2O + 2 H(+) = sarcosine + NH4(+) + CO2. It functions in the pathway amine and polyamine degradation; creatinine degradation; sarcosine from creatinine: step 3/3. The protein is N-carbamoylsarcosine amidase of Arthrobacter sp.